We begin with the raw amino-acid sequence, 534 residues long: CTP synthase (534 aa).

The interval 1 to 267 (MTKYIFVTGG…DQIVCDHLKL (267 aa)) is amidoligase domain. Ser13 lines the CTP pocket. Ser13 contributes to the UTP binding site. Residue 14–19 (SIGKGI) coordinates ATP. L-glutamine is bound at residue Tyr54. Asp71 provides a ligand contact to ATP. Residues Asp71 and Glu141 each contribute to the Mg(2+) site. Residues 148–150 (DIE), 188–193 (KTKPTQ), and Lys224 contribute to the CTP site. UTP is bound by residues 188–193 (KTKPTQ) and Lys224. The 243-residue stretch at 292 to 534 (KIALVGKYVE…FVTAAVENAK (243 aa)) folds into the Glutamine amidotransferase type-1 domain. Gly354 is an L-glutamine binding site. Cys381 acts as the Nucleophile; for glutamine hydrolysis in catalysis. L-glutamine contacts are provided by residues 382–385 (LGMQ), Glu405, and Arg463. Catalysis depends on residues His508 and Glu510.

This sequence belongs to the CTP synthase family. In terms of assembly, homotetramer.

It carries out the reaction UTP + L-glutamine + ATP + H2O = CTP + L-glutamate + ADP + phosphate + 2 H(+). It catalyses the reaction L-glutamine + H2O = L-glutamate + NH4(+). The catalysed reaction is UTP + NH4(+) + ATP = CTP + ADP + phosphate + 2 H(+). It participates in pyrimidine metabolism; CTP biosynthesis via de novo pathway; CTP from UDP: step 2/2. Its activity is regulated as follows. Allosterically activated by GTP, when glutamine is the substrate; GTP has no effect on the reaction when ammonia is the substrate. The allosteric effector GTP functions by stabilizing the protein conformation that binds the tetrahedral intermediate(s) formed during glutamine hydrolysis. Inhibited by the product CTP, via allosteric rather than competitive inhibition. Functionally, catalyzes the ATP-dependent amination of UTP to CTP with either L-glutamine or ammonia as the source of nitrogen. Regulates intracellular CTP levels through interactions with the four ribonucleotide triphosphates. This chain is CTP synthase, found in Streptococcus thermophilus (strain CNRZ 1066).